The primary structure comprises 1404 residues: DNA-directed RNA polymerase subunit beta' (1404 aa).

Positions 60, 62, 75, and 78 each coordinate Zn(2+). The Mg(2+) site is built by aspartate 449, aspartate 451, and aspartate 453. The Zn(2+) site is built by cysteine 778, cysteine 852, cysteine 859, and cysteine 862. The interval leucine 1380–glutamate 1404 is disordered. Over residues leucine 1384–glutamate 1404 the composition is skewed to acidic residues.

The protein belongs to the RNA polymerase beta' chain family. As to quaternary structure, the RNAP catalytic core consists of 2 alpha, 1 beta, 1 beta' and 1 omega subunit. When a sigma factor is associated with the core the holoenzyme is formed, which can initiate transcription. It depends on Mg(2+) as a cofactor. The cofactor is Zn(2+).

It catalyses the reaction RNA(n) + a ribonucleoside 5'-triphosphate = RNA(n+1) + diphosphate. Functionally, DNA-dependent RNA polymerase catalyzes the transcription of DNA into RNA using the four ribonucleoside triphosphates as substrates. This is DNA-directed RNA polymerase subunit beta' from Leptospira interrogans serogroup Icterohaemorrhagiae serovar Lai (strain 56601).